The sequence spans 436 residues: Glutamate-1-semialdehyde 2,1-aminomutase (436 aa).

Lys272 is subject to N6-(pyridoxal phosphate)lysine.

This sequence belongs to the class-III pyridoxal-phosphate-dependent aminotransferase family. HemL subfamily. As to quaternary structure, homodimer. Pyridoxal 5'-phosphate is required as a cofactor.

The protein localises to the cytoplasm. It catalyses the reaction (S)-4-amino-5-oxopentanoate = 5-aminolevulinate. It participates in porphyrin-containing compound metabolism; protoporphyrin-IX biosynthesis; 5-aminolevulinate from L-glutamyl-tRNA(Glu): step 2/2. The protein operates within porphyrin-containing compound metabolism; chlorophyll biosynthesis. In Methylibium petroleiphilum (strain ATCC BAA-1232 / LMG 22953 / PM1), this protein is Glutamate-1-semialdehyde 2,1-aminomutase.